Consider the following 429-residue polypeptide: MNHSRSHALFAQAQTVLPGGVNSPVRAFKSVGGEPFFVARADGSYLFDVDGNRYIDYVGSWGPMIAGHNHPAVREAVERAIRDGLSFGAPCAAEVTMAETITGLVPSCEMVRMVNSGTEATLSAVRLARGATGRNRIIKFEGCYHGHGDSFLVKAGSGMLTLGVPTSPGVPAGLSELTATLSFNDFEGATALFDEIGPEVAAVIIEPVVGNANCIPPQAGYLQHLRTLCTRHGALLIFDEVMTGFRVALGGAQAHYGVTPDLSTFGKIIGGGMPVGAYGGRRDLMEQIAPAGPIYQAGTLSGNPVAMAAGLAMLELVQEPGFHMRLSEATSALCEGLKDAARTAGIAVTTNQVGGMFGLFFTDDIVESYAQATACDITSFNRFFHAMLQRGVYLAPSAYEAGFMSSAHDATVIEATLAAARDAFADVAR.

Lysine 267 bears the N6-(pyridoxal phosphate)lysine mark.

This sequence belongs to the class-III pyridoxal-phosphate-dependent aminotransferase family. HemL subfamily. In terms of assembly, homodimer. Requires pyridoxal 5'-phosphate as cofactor.

It is found in the cytoplasm. It catalyses the reaction (S)-4-amino-5-oxopentanoate = 5-aminolevulinate. It functions in the pathway porphyrin-containing compound metabolism; protoporphyrin-IX biosynthesis; 5-aminolevulinate from L-glutamyl-tRNA(Glu): step 2/2. The sequence is that of Glutamate-1-semialdehyde 2,1-aminomutase from Xanthomonas oryzae pv. oryzae (strain MAFF 311018).